The sequence spans 292 residues: Glycine--tRNA ligase alpha subunit (292 aa).

It belongs to the class-II aminoacyl-tRNA synthetase family. Tetramer of two alpha and two beta subunits.

The protein resides in the cytoplasm. The catalysed reaction is tRNA(Gly) + glycine + ATP = glycyl-tRNA(Gly) + AMP + diphosphate. The sequence is that of Glycine--tRNA ligase alpha subunit from Syntrophus aciditrophicus (strain SB).